A 274-amino-acid polypeptide reads, in one-letter code: Receptor-like protein 44 (274 aa).

Residues 1 to 24 (MTRSHRLLLLLLLIFQTAQRLTTA) form the signal peptide. Topologically, residues 25–223 (DPNDEACLKN…PLQEMMMKSK (199 aa)) are extracellular. 3 N-linked (GlcNAc...) asparagine glycosylation sites follow: Asn-48, Asn-82, and Asn-95. 4 LRR repeats span residues 96-121 (CTNLQSLDLSSNQISGVIPPEIQYLV), 123-144 (LAVLNLSSNHLSGEITPQLALC), 145-168 (AYLNVIDLHDNELSGQIPQQLGLL), and 169-192 (ARLSAFDVSNNKLSGQIPTYLSNR). The N-linked (GlcNAc...) asparagine glycan is linked to Asn-127. N-linked (GlcNAc...) asparagine glycans are attached at residues Asn-191 and Asn-200. The chain crosses the membrane as a helical span at residues 224–244 (GLSVMAIVGIGLGSGIASLMI). Topologically, residues 245–274 (SFTGVCLWLRITEKKIVEEEGKISQSMPDY) are cytoplasmic.

This sequence belongs to the RLP family.

Its subcellular location is the cell membrane. This Arabidopsis thaliana (Mouse-ear cress) protein is Receptor-like protein 44.